We begin with the raw amino-acid sequence, 156 residues long: Small ribosomal subunit protein uS7 (156 aa).

The protein belongs to the universal ribosomal protein uS7 family. In terms of assembly, part of the 30S ribosomal subunit. Contacts proteins S9 and S11.

In terms of biological role, one of the primary rRNA binding proteins, it binds directly to 16S rRNA where it nucleates assembly of the head domain of the 30S subunit. Is located at the subunit interface close to the decoding center, probably blocks exit of the E-site tRNA. The polypeptide is Small ribosomal subunit protein uS7 (Campylobacter hominis (strain ATCC BAA-381 / DSM 21671 / CCUG 45161 / LMG 19568 / NCTC 13146 / CH001A)).